A 381-amino-acid polypeptide reads, in one-letter code: Orotidine 5'-phosphate decarboxylase (381 aa).

Substrate-binding positions include Asp-42, 64–66, 99–108, Tyr-333, and Arg-352; these read KTH and DRKFGDIGHT. Lys-101 serves as the catalytic Proton donor. The tract at residues 311 to 333 is disordered; it reads LPPEDEDQQTNGSVGGDGQGQQY.

The protein belongs to the OMP decarboxylase family.

It carries out the reaction orotidine 5'-phosphate + H(+) = UMP + CO2. It functions in the pathway pyrimidine metabolism; UMP biosynthesis via de novo pathway; UMP from orotate: step 2/2. The sequence is that of Orotidine 5'-phosphate decarboxylase (ura3) from Hypocrea jecorina (Trichoderma reesei).